Reading from the N-terminus, the 334-residue chain is Glycerol-3-phosphate dehydrogenase [NAD(P)+] (334 aa).

NADPH contacts are provided by Trp-13, Arg-33, and Lys-106. Sn-glycerol 3-phosphate contacts are provided by Lys-106, Gly-137, and Ser-139. Ala-141 serves as a coordination point for NADPH. Sn-glycerol 3-phosphate-binding residues include Lys-192, Asp-245, Ser-255, Arg-256, and Asn-257. The active-site Proton acceptor is Lys-192. Arg-256 is an NADPH binding site. NADPH contacts are provided by Val-280 and Glu-282.

Belongs to the NAD-dependent glycerol-3-phosphate dehydrogenase family.

The protein resides in the cytoplasm. The enzyme catalyses sn-glycerol 3-phosphate + NAD(+) = dihydroxyacetone phosphate + NADH + H(+). It catalyses the reaction sn-glycerol 3-phosphate + NADP(+) = dihydroxyacetone phosphate + NADPH + H(+). Its pathway is membrane lipid metabolism; glycerophospholipid metabolism. Its function is as follows. Catalyzes the reduction of the glycolytic intermediate dihydroxyacetone phosphate (DHAP) to sn-glycerol 3-phosphate (G3P), the key precursor for phospholipid synthesis. The polypeptide is Glycerol-3-phosphate dehydrogenase [NAD(P)+] (Chlamydia trachomatis serovar L2 (strain ATCC VR-902B / DSM 19102 / 434/Bu)).